A 47-amino-acid polypeptide reads, in one-letter code: Gas vesicle protein A (47 aa).

This sequence belongs to the gas vesicle GvpA family. In terms of assembly, the gas vesicle shell is 2 nm thick and consists of a single layer of this protein. It forms helical ribs nearly perpendicular to the long axis of the vesicle.

The protein localises to the gas vesicle shell. Its function is as follows. Gas vesicles are hollow, gas filled proteinaceous nanostructures found in some microorganisms. During planktonic growth they allow positioning of the organism at a favorable depth for light or nutrient acquisition. GvpA forms the protein shell. The chain is Gas vesicle protein A from Dactylococcopsis salina (Myxobaktron salinum).